A 159-amino-acid chain; its full sequence is uncharacterized protein (159 aa).

3 consecutive transmembrane segments (helical) span residues 16 to 36, 84 to 104, and 112 to 132; these read IVLPLVQIIHVSGHSFMAFIF, VYAGGCLFNLITIFAINLLII, and VFFYQFVYFSTYYVFFALLPV.

Its subcellular location is the cell membrane. This is an uncharacterized protein from Bacillus subtilis (strain 168).